The sequence spans 331 residues: 6-phosphogluconolactonase (331 aa).

Position 287 is an N6-acetyllysine (K287).

It belongs to the cycloisomerase 2 family.

It carries out the reaction 6-phospho-D-glucono-1,5-lactone + H2O = 6-phospho-D-gluconate + H(+). It participates in carbohydrate degradation; pentose phosphate pathway; D-ribulose 5-phosphate from D-glucose 6-phosphate (oxidative stage): step 2/3. In terms of biological role, catalyzes the hydrolysis of 6-phosphogluconolactone to 6-phosphogluconate. This chain is 6-phosphogluconolactonase, found in Shigella flexneri.